Reading from the N-terminus, the 118-residue chain is Small ribosomal subunit protein uS13 (118 aa).

Residues 93–118 are disordered; it reads RGLPVRGQRTKTNARTRKGPRKPIRK.

It belongs to the universal ribosomal protein uS13 family. In terms of assembly, part of the 30S ribosomal subunit. Forms a loose heterodimer with protein S19. Forms two bridges to the 50S subunit in the 70S ribosome.

Its function is as follows. Located at the top of the head of the 30S subunit, it contacts several helices of the 16S rRNA. In the 70S ribosome it contacts the 23S rRNA (bridge B1a) and protein L5 of the 50S subunit (bridge B1b), connecting the 2 subunits; these bridges are implicated in subunit movement. Contacts the tRNAs in the A and P-sites. This Pseudomonas fluorescens (strain ATCC BAA-477 / NRRL B-23932 / Pf-5) protein is Small ribosomal subunit protein uS13.